Reading from the N-terminus, the 226-residue chain is V-type proton ATPase subunit E (226 aa).

This sequence belongs to the V-ATPase E subunit family. In terms of assembly, V-ATPase is a heteromultimeric enzyme made up of two complexes: the ATP-hydrolytic V1 complex and the proton translocation V0 complex. The V1 complex consists of three catalytic AB heterodimers that form a heterohexamer, three peripheral stalks each consisting of EG heterodimers, one central rotor including subunits D and F, and the regulatory subunits C and H. The proton translocation complex V0 consists of the proton transport subunit a, a ring of proteolipid subunits c9c'', rotary subunit d, subunits e and f, and the accessory subunits vah-19/Ac45 and vah-20/PRR. In terms of tissue distribution, expressed in the excretory cell and syncytial hypodermal cells (at protein level). Expressed in the intestine (at protein level).

The protein resides in the cytoplasm. The protein localises to the apical cell membrane. Subunit of the V1 complex of vacuolar(H+)-ATPase (V-ATPase), a multisubunit enzyme composed of a peripheral complex (V1) that hydrolyzes ATP and a membrane integral complex (V0) that translocates protons. V-ATPase is responsible for acidifying and maintaining the pH of intracellular compartments and in some cell types, is targeted to the plasma membrane, where it is responsible for acidifying the extracellular environment. Regulates pH homeostasis in the intestine. Probably by regulating cytoplasmic pH, required for cell survival in the intestine and hypodermis. Involved in receptor-mediated endocytosis. Involved in embryogenesis and larval development. The protein is V-type proton ATPase subunit E of Caenorhabditis elegans.